Reading from the N-terminus, the 210-residue chain is Ribosomal RNA large subunit methyltransferase E (210 aa).

Residues G60, W62, D85, D101, and D126 each contribute to the S-adenosyl-L-methionine site. K166 acts as the Proton acceptor in catalysis.

It belongs to the class I-like SAM-binding methyltransferase superfamily. RNA methyltransferase RlmE family.

The protein resides in the cytoplasm. It catalyses the reaction uridine(2552) in 23S rRNA + S-adenosyl-L-methionine = 2'-O-methyluridine(2552) in 23S rRNA + S-adenosyl-L-homocysteine + H(+). Functionally, specifically methylates the uridine in position 2552 of 23S rRNA at the 2'-O position of the ribose in the fully assembled 50S ribosomal subunit. The protein is Ribosomal RNA large subunit methyltransferase E of Bordetella pertussis (strain Tohama I / ATCC BAA-589 / NCTC 13251).